Reading from the N-terminus, the 530-residue chain is Sulfate adenylyltransferase (530 aa).

The interval 1 to 178 is N-terminal; sequence MPIPAPHGGK…IQGLDYPTHY (178 aa). The interval 179 to 410 is catalytic; the sequence is DYIPFRKTPT…LRESNPPRSK (232 aa). Q208 contributes to the sulfate binding site. ATP-binding positions include 208–211 and 304–307; these read QTRN and GRDH. Active-site residues include T209, R210, and N211. R210 contributes to the sulfate binding site. Sulfate is bound at residue A308. Position 348 (V348) interacts with ATP. Positions 411 to 530 are required for oligomerization; adenylyl-sulfate kinase-like; that stretch reads QGFAIVIDSS…LVSQGFYQQS (120 aa).

It belongs to the sulfate adenylyltransferase family. Homohexamer. Dimer of trimers.

It localises to the cytoplasm. It catalyses the reaction sulfate + ATP + H(+) = adenosine 5'-phosphosulfate + diphosphate. The protein operates within sulfur metabolism; hydrogen sulfide biosynthesis; sulfite from sulfate: step 1/3. Catalyzes the first intracellular reaction of sulfate assimilation, forming adenosine-5'-phosphosulfate (APS) from inorganic sulfate and ATP. Plays an important role in sulfate activation as a component of the biosynthesis pathway of sulfur-containing amino acids. In Debaryomyces hansenii (strain ATCC 36239 / CBS 767 / BCRC 21394 / JCM 1990 / NBRC 0083 / IGC 2968) (Yeast), this protein is Sulfate adenylyltransferase.